Consider the following 139-residue polypeptide: Transcription antitermination protein NusB (139 aa).

It belongs to the NusB family.

Involved in transcription antitermination. Required for transcription of ribosomal RNA (rRNA) genes. Binds specifically to the boxA antiterminator sequence of the ribosomal RNA (rrn) operons. This is Transcription antitermination protein NusB from Enterobacter sp. (strain 638).